We begin with the raw amino-acid sequence, 364 residues long: Membrane-bound lytic murein transglycosylase C (364 aa).

The first 19 residues, 1 to 19, serve as a signal peptide directing secretion; sequence MNKYKKFLPLLVLIPFLAS. Cysteine 20 is lipidated: N-palmitoyl cysteine. Cysteine 20 carries S-diacylglycerol cysteine lipidation.

This sequence belongs to the transglycosylase Slt family.

It is found in the cell outer membrane. The catalysed reaction is Exolytic cleavage of the (1-&gt;4)-beta-glycosidic linkage between N-acetylmuramic acid (MurNAc) and N-acetylglucosamine (GlcNAc) residues in peptidoglycan, from either the reducing or the non-reducing ends of the peptidoglycan chains, with concomitant formation of a 1,6-anhydrobond in the MurNAc residue.. Murein-degrading enzyme. May play a role in recycling of muropeptides during cell elongation and/or cell division. The chain is Membrane-bound lytic murein transglycosylase C from Glaesserella parasuis serovar 5 (strain SH0165) (Haemophilus parasuis).